The sequence spans 321 residues: MATSSGSCLIISLLVVVVAAALSASTASAQLSSTFYDTSCPSAMSTISSGVNSAVAQQARVGASLLRLHFHDCFIQGCDASILLNDTSGEQTQPPNLTLNPRAFDVVNSIKAQVEAACPGVVSCADILAVAARDGVVALGGPSWTVLLGRRDSTGSFPSQTSDLPPPTSSLQALLAAYSKKNLDATDMVALSGAHTIGQAQCSSFNGHIYNDTNINAAFATSLKANCPMSGGSSLAPLDTMTPTVFGNDYYKNLLSQKGLLHSDQELFNNGSTDSTVSNFASSSAAFTSAFTAAMVKMGNLGPLTGTSGQIRLTCWKLNSS.

Residues 1-29 (MATSSGSCLIISLLVVVVAAALSASTASA) form the signal peptide. Pyrrolidone carboxylic acid is present on Q30. 4 cysteine pairs are disulfide-bonded: C40–C118, C73–C78, C124–C315, and C202–C227. H71 (proton acceptor) is an active-site residue. Ca(2+) contacts are provided by D72, I75, G77, D79, and S81. N85 and N96 each carry an N-linked (GlcNAc...) asparagine glycan. P165 provides a ligand contact to substrate. H195 is a binding site for heme b. Ca(2+) is bound at residue T196. Residue N211 is glycosylated (N-linked (GlcNAc...) asparagine). Ca(2+) is bound by residues D239, T242, and G247. N270 carries an N-linked (GlcNAc...) asparagine glycan.

It belongs to the peroxidase family. Classical plant (class III) peroxidase subfamily. It depends on heme b as a cofactor. Ca(2+) serves as cofactor.

It localises to the secreted. The catalysed reaction is 2 a phenolic donor + H2O2 = 2 a phenolic radical donor + 2 H2O. Functionally, removal of H(2)O(2), oxidation of toxic reductants, biosynthesis and degradation of lignin, suberization, auxin catabolism, response to environmental stresses such as wounding, pathogen attack and oxidative stress. These functions might be dependent on each isozyme/isoform in each plant tissue. The chain is Peroxidase 42 (PER42) from Zea mays (Maize).